The primary structure comprises 513 residues: MQLNPTEISELIKKRIASYDAAAQARTEGTVVSLSDGIVRLHGLADVMQGEMIEFPGNTYGLALNLERDSVGAVVLGDYKHIKEGDTARCTGRILEVPVGEALLGRVVNSLGMAVDGKGAIDTSLTSPIEKIAPGVIERQSVDQPVQTGLKAIDAMVPIGRGQRELIIGDRQTGKTAVAVDAIINQKGTGVKCIYVAVGQKASSIANVVTKLEQHGALEHTIIVAATASESAAMQFIAPYAGCAMGEYFRDRGQDALIIYDDLTKQAWAYRQVSLLLRRPPGREAYPGDVFYLHSRLLERASRVNAEYVEKFTNGEVKGKTGSLTALPIIETQAGDVSAFVPTNVISITDGQIFLETDLFNAGIRPAINAGLSVSRVGGAAQTKIIKKLGGGVRLALAQYRELAAFSQFASDLDELTRKQLERGKRVTELMKQGQFSPMSVAEMAFSLFAANEGYLDDVDAKKVVDFEKAMLDFLRSSKTDLLAKINEKGDYNDDIQAGMKAALDEFKAKHSW.

169 to 176 (GDRQTGKT) contacts ATP.

The protein belongs to the ATPase alpha/beta chains family. As to quaternary structure, F-type ATPases have 2 components, CF(1) - the catalytic core - and CF(0) - the membrane proton channel. CF(1) has five subunits: alpha(3), beta(3), gamma(1), delta(1), epsilon(1). CF(0) has three main subunits: a(1), b(2) and c(9-12). The alpha and beta chains form an alternating ring which encloses part of the gamma chain. CF(1) is attached to CF(0) by a central stalk formed by the gamma and epsilon chains, while a peripheral stalk is formed by the delta and b chains.

It is found in the cell inner membrane. It catalyses the reaction ATP + H2O + 4 H(+)(in) = ADP + phosphate + 5 H(+)(out). Its function is as follows. Produces ATP from ADP in the presence of a proton gradient across the membrane. The alpha chain is a regulatory subunit. The polypeptide is ATP synthase subunit alpha (Thioalkalivibrio sulfidiphilus (strain HL-EbGR7)).